Consider the following 78-residue polypeptide: Large ribosomal subunit protein bL28 (78 aa).

The interval 1-22 (MSKVCQVTGKRPTTGNNVSHAN) is disordered. Residues 11–22 (RPTTGNNVSHAN) show a composition bias toward polar residues.

Belongs to the bacterial ribosomal protein bL28 family.

In Alkalilimnicola ehrlichii (strain ATCC BAA-1101 / DSM 17681 / MLHE-1), this protein is Large ribosomal subunit protein bL28.